The primary structure comprises 1011 residues: Retinoblastoma-related protein (1011 aa).

The interval 1-22 (MSQASVDMEDVKPSISLPSDDG) is disordered. Residues 411–612 (TPVSTAMTTA…ERGSSMYNSL (202 aa)) form a domain A region. The interval 411 to 860 (TPVSTAMTTA…NEVFIPSVKP (450 aa)) is pocket. A spacer region spans residues 613 to 729 (IVARPTLAAE…PAGGGETCAE (117 aa)). The tract at residues 730–860 (TGINIFFNKI…NEVFIPSVKP (131 aa)) is domain B. Residues 872–903 (QKSKSSPEDSNNADSQIPGSPRLSPFPNLPDM) are disordered. A compositionally biased stretch (polar residues) spans 873–889 (KSKSSPEDSNNADSQIP).

It belongs to the retinoblastoma protein (RB) family.

The protein resides in the nucleus. Functionally, regulator of biological processes that recruits a histone deacetylase to control gene transcription. May play a role in the entry into mitosis, negatively regulating the cell proliferation. Formation of stable complexes with geminiviridae replication-associated proteins may create a cellular environment which favors viral DNA replication. The chain is Retinoblastoma-related protein (Rb1) from Cocos nucifera (Coconut palm).